We begin with the raw amino-acid sequence, 220 residues long: Ras-related protein Rab-3A (220 aa).

Positions 31, 32, 33, 34, 35, 36, 37, 48, 49, 53, and 54 each coordinate GTP. T36 is a binding site for Mg(2+). Positions 49 to 58 match the Switch 1 motif; the sequence is PAFVSTVGID. T54 and D77 together coordinate Mg(2+). G80 contacts GTP. The Switch 2 signature appears at 80 to 96; the sequence is GQERYRTITTAYYRGAM. A Phosphothreonine; by LRRK2 modification is found at T86. Positions 135, 136, 138, 166, and 167 each coordinate GTP. A phosphoserine mark is found at S188 and S190. The disordered stretch occupies residues 194-220; that stretch reads ADPAVTGAKQGPQLSDQQVPPHQDCAC. 2 S-geranylgeranyl cysteine lipidation sites follow: C218 and C220. C220 is modified (cysteine methyl ester).

It belongs to the small GTPase superfamily. Rab family. In terms of assembly, interacts with RIMS1 and RIMS2. Interacts with Rabphilin-3A/RPH3A and Rab effector Noc2/RPH3AL. Interacts with SYTL4. Interacts with RAB3IP. Interacts with SGSM1 and SGSM3. Interacts with SYT1. Interacts with MYH9; this interaction is essential for lysosome exocytosis and plasma membrane repair. Interacts with STXBP1; this interaction promotes RAB3A dissociation from the vesicle membrane. Interacts with SNCA. The GTP-bound form interacts with REP15. Interacts with GDI1, GDI2, CHM and CHML; phosphorylation at Thr-86 disrupts these interactions. Interacts with MADD (via uDENN domain); the GTP-bound form is preferred for interaction. It depends on Mg(2+) as a cofactor. Post-translationally, phosphorylation of Thr-86 in the switch II region by LRRK2 prevents the association of RAB regulatory proteins, including CHM, CHML and RAB GDP dissociation inhibitors GDI1 and GDI2. Specifically expressed in brain.

Its subcellular location is the cytoplasm. It is found in the cytosol. It localises to the lysosome. The protein resides in the cytoplasmic vesicle. The protein localises to the secretory vesicle. Its subcellular location is the cell projection. It is found in the axon. It localises to the cell membrane. The protein resides in the presynapse. The protein localises to the postsynapse. The enzyme catalyses GTP + H2O = GDP + phosphate + H(+). With respect to regulation, regulated by guanine nucleotide exchange factors (GEFs) including RAB3IL1 and MADD which promote the exchange of bound GDP for free GTP. Regulated by GTPase activating proteins (GAPs) including RAB3GAP1 and TBC1D10B which increase the GTP hydrolysis activity. Inhibited by GDP dissociation inhibitors (GDIs) which prevent Rab-GDP dissociation. Functionally, the small GTPases Rab are key regulators of intracellular membrane trafficking, from the formation of transport vesicles to their fusion with membranes. Rabs cycle between an inactive GDP-bound form and an active GTP-bound form that is able to recruit to membranes different sets of downstream effectors directly responsible for vesicle formation, movement, tethering and fusion. RAB3A plays a central role in regulated exocytosis and secretion. Controls the recruitment, tethering and docking of secretory vesicles to the plasma membrane. Upon stimulation, switches to its active GTP-bound form, cycles to vesicles and recruits effectors such as RIMS1, RIMS2, Rabphilin-3A/RPH3A, RPH3AL or SYTL4 to help the docking of vesicules onto the plasma membrane. Upon GTP hydrolysis by GTPase-activating protein, dissociates from the vesicle membrane allowing the exocytosis to proceed. Stimulates insulin secretion through interaction with RIMS2 or RPH3AL effectors in pancreatic beta cells. Regulates calcium-dependent lysosome exocytosis and plasma membrane repair (PMR) via the interaction with 2 effectors, SYTL4 and myosin-9/MYH9. Acts as a positive regulator of acrosome content secretion in sperm cells by interacting with RIMS1. Also plays a role in the regulation of dopamine release by interacting with synaptotagmin I/SYT. This Homo sapiens (Human) protein is Ras-related protein Rab-3A.